We begin with the raw amino-acid sequence, 120 residues long: uncharacterized protein (120 aa).

4 helical membrane passes run 9 to 29 (WPDF…LFCG), 32 to 52 (ALMF…ADCL), 68 to 88 (FVWP…VMAT), and 94 to 114 (GPEH…SFRF).

The protein localises to the membrane. This is an uncharacterized protein from Escherichia phage Mu (Bacteriophage Mu).